Consider the following 405-residue polypeptide: Tryptophan synthase beta chain (405 aa).

The residue at position 98 (K98) is an N6-(pyridoxal phosphate)lysine.

Belongs to the TrpB family. As to quaternary structure, tetramer of two alpha and two beta chains. Requires pyridoxal 5'-phosphate as cofactor.

It carries out the reaction (1S,2R)-1-C-(indol-3-yl)glycerol 3-phosphate + L-serine = D-glyceraldehyde 3-phosphate + L-tryptophan + H2O. Its pathway is amino-acid biosynthesis; L-tryptophan biosynthesis; L-tryptophan from chorismate: step 5/5. Its function is as follows. The beta subunit is responsible for the synthesis of L-tryptophan from indole and L-serine. This chain is Tryptophan synthase beta chain, found in Stenotrophomonas maltophilia (strain R551-3).